Reading from the N-terminus, the 308-residue chain is Elongation factor Ts (308 aa).

The tract at residues 80-83 is involved in Mg(2+) ion dislocation from EF-Tu; the sequence is TDFV.

This sequence belongs to the EF-Ts family.

The protein localises to the cytoplasm. In terms of biological role, associates with the EF-Tu.GDP complex and induces the exchange of GDP to GTP. It remains bound to the aminoacyl-tRNA.EF-Tu.GTP complex up to the GTP hydrolysis stage on the ribosome. The protein is Elongation factor Ts of Rhodopseudomonas palustris (strain BisB18).